Consider the following 143-residue polypeptide: Large ribosomal subunit protein uL16 (143 aa).

This sequence belongs to the universal ribosomal protein uL16 family. As to quaternary structure, part of the 50S ribosomal subunit.

Its function is as follows. Binds 23S rRNA and is also seen to make contacts with the A and possibly P site tRNAs. The sequence is that of Large ribosomal subunit protein uL16 from Fusobacterium nucleatum subsp. nucleatum (strain ATCC 25586 / DSM 15643 / BCRC 10681 / CIP 101130 / JCM 8532 / KCTC 2640 / LMG 13131 / VPI 4355).